The primary structure comprises 115 residues: C-C motif chemokine 6 (115 aa).

Residues 1-21 (MRHSKTAISFFILVAVLGSQA) form the signal peptide. Disulfide bonds link Cys49–Cys72, Cys50–Cys88, and Cys59–Cys99.

This sequence belongs to the intercrine beta (chemokine CC) family.

The protein resides in the secreted. The polypeptide is C-C motif chemokine 6 (Ccl6) (Rattus norvegicus (Rat)).